The sequence spans 93 residues: Small ribosomal subunit protein uS19c (93 aa).

Residues 73-93 are disordered; sequence EFSPTRTFRGHTKSDKKSRRP. Positions 80–93 are enriched in basic residues; sequence FRGHTKSDKKSRRP.

It belongs to the universal ribosomal protein uS19 family.

It is found in the plastid. It localises to the chloroplast. Protein S19 forms a complex with S13 that binds strongly to the 16S ribosomal RNA. This Mesostigma viride (Green alga) protein is Small ribosomal subunit protein uS19c (rps19).